Reading from the N-terminus, the 914-residue chain is Linoleate 13S-lipoxygenase 3-1, chloroplastic (914 aa).

The transit peptide at 1–83 directs the protein to the chloroplast; that stretch reads MALAKEIMGI…PEKAVRFKVR (83 aa). One can recognise a PLAT domain in the interval 96–218; that stretch reads LKETIVKHLD…DHPGKRIFFS (123 aa). The region spanning 221 to 914 is the Lipoxygenase domain; that stretch reads PYLPDETPAG…CRGVPNSVSI (694 aa). The Fe cation site is built by H574, H579, H765, N769, and I914.

This sequence belongs to the lipoxygenase family. In terms of assembly, monomer. Fe cation is required as a cofactor. Expressed in roots and leaves. Detected in tubers and flower buds.

Its subcellular location is the plastid. It localises to the chloroplast stroma. The protein localises to the chloroplast thylakoid. It carries out the reaction (9Z,12Z)-octadecadienoate + O2 = (13S)-hydroperoxy-(9Z,11E)-octadecadienoate. It catalyses the reaction (9Z,12Z,15Z)-octadecatrienoate + O2 = (13S)-hydroperoxy-(9Z,11E,15Z)-octadecatrienoate. Its pathway is lipid metabolism; oxylipin biosynthesis. Functionally, plant lipoxygenases may be involved in a number of diverse aspects of plant physiology including growth and development, pest resistance, and senescence or responses to wounding. Required for the regulation of wound-induced gene expression, but is not involved in the bulk production of jasmonate upon wounding. Catalyzes the hydroperoxidation of lipids containing a cis,cis-1,4-pentadiene structure. Linolenic acid is the preferred substrate, before linoleic and arachidonic acids. This Solanum tuberosum (Potato) protein is Linoleate 13S-lipoxygenase 3-1, chloroplastic (LOX3.1).